We begin with the raw amino-acid sequence, 189 residues long: Insecticyanin-A (189 aa).

Disulfide bonds link C9–C119 and C43–C175.

This sequence belongs to the calycin superfamily. Lipocalin family. As to quaternary structure, homotetramer. Synthesized only in the caterpillars, apparently by the epidermis and secreted into the hemolymph. The protein is passed over from the larval hemolymph to that of pupae and adults and is sequestered in the eggs.

The protein localises to the secreted. This protein binds a chromophore: biliverdin IX, isomer gamma. Mixed with lipoprotein-bound carotenes, this blue protein provides hornworms with their green cryptic coloration which serves a camouflage. In Manduca sexta (Tobacco hawkmoth), this protein is Insecticyanin-A (INSA).